Reading from the N-terminus, the 578-residue chain is Probable acyl-activating enzyme 12, peroxisomal (578 aa).

The Microbody targeting signal signature appears at 576–578; it reads SRL.

The protein belongs to the ATP-dependent AMP-binding enzyme family. In terms of tissue distribution, expressed at low levels in leaves.

The protein localises to the peroxisome. Its function is as follows. May act as an acid--thiol ligase that activates carboxylic acids by forming acyl-CoAs. This chain is Probable acyl-activating enzyme 12, peroxisomal (AAE12), found in Arabidopsis thaliana (Mouse-ear cress).